The sequence spans 264 residues: Hemin import ATP-binding protein HmuV (264 aa).

In terms of domain architecture, ABC transporter spans 2 to 241; the sequence is IEVSGLSVRL…ATMLSVFGCA (240 aa). 34–41 serves as a coordination point for ATP; it reads GPNGSGKT.

Belongs to the ABC transporter superfamily. Heme (hemin) importer (TC 3.A.1.14.5) family. The complex is composed of two ATP-binding proteins (HmuV), two transmembrane proteins (HmuU) and a solute-binding protein (HmuT).

It is found in the cell inner membrane. In terms of biological role, part of the ABC transporter complex HmuTUV involved in hemin import. Responsible for energy coupling to the transport system. The polypeptide is Hemin import ATP-binding protein HmuV (Rhizobium etli (strain ATCC 51251 / DSM 11541 / JCM 21823 / NBRC 15573 / CFN 42)).